A 696-amino-acid chain; its full sequence is uncharacterized protein (696 aa).

Transmembrane regions (helical) follow at residues 38–58 (IISIISGIFIGLTAALLNALA), 107–127 (LIYVSVSVGFAFIATTLGYVV), 215–235 (AMASGIAASFNAPVGGVIFAL), 245–265 (SLFTGSIWYEFLCSASSVVAL), 292–312 (TLPFIFISILCGCLGSVLIYL), 329–349 (VFFVIFLSLITSLTAYAILGE), 380–400 (FWVTAIVLFTSALLGLLLTSA), 402–422 (FGAAIPTGIIVPSLAIGACIG), 433–453 (FPSLAGTSIYGVIGSIAFLSS), and 457–477 (LVVALVVILFELTGALNIALP). CBS domains are found at residues 527 to 587 (RSPE…PMSS) and 617 to 674 (IHPT…THTG).

The protein belongs to the chloride channel (TC 2.A.49) family.

It localises to the membrane. Voltage-gated chloride channel. This is an uncharacterized protein from Schizosaccharomyces pombe (strain 972 / ATCC 24843) (Fission yeast).